The chain runs to 240 residues: Orotidine 5'-phosphate decarboxylase (240 aa).

Residues aspartate 19, lysine 41, 68–77, threonine 123, arginine 184, glutamine 193, glycine 213, and arginine 214 contribute to the substrate site; that span reads DYKYYDIEET. Residue lysine 70 is the Proton donor of the active site.

This sequence belongs to the OMP decarboxylase family. Type 1 subfamily. In terms of assembly, homodimer.

The catalysed reaction is orotidine 5'-phosphate + H(+) = UMP + CO2. It functions in the pathway pyrimidine metabolism; UMP biosynthesis via de novo pathway; UMP from orotate: step 2/2. Its function is as follows. Catalyzes the decarboxylation of orotidine 5'-monophosphate (OMP) to uridine 5'-monophosphate (UMP). This Nitrobacter winogradskyi (strain ATCC 25391 / DSM 10237 / CIP 104748 / NCIMB 11846 / Nb-255) protein is Orotidine 5'-phosphate decarboxylase.